We begin with the raw amino-acid sequence, 205 residues long: Small ribosomal subunit protein uS4 (205 aa).

The region spanning 103–173 (RRLQTIVMKK…LEKSKRAEAA (71 aa)) is the S4 RNA-binding domain. The interval 174 to 205 (AREAAAEAAEAEQAAAQAAAPTPAPAAAAPKQ) is disordered. Residues 179-205 (AEAAEAEQAAAQAAAPTPAPAAAAPKQ) are compositionally biased toward low complexity.

Belongs to the universal ribosomal protein uS4 family. As to quaternary structure, part of the 30S ribosomal subunit. Contacts protein S5. The interaction surface between S4 and S5 is involved in control of translational fidelity.

Functionally, one of the primary rRNA binding proteins, it binds directly to 16S rRNA where it nucleates assembly of the body of the 30S subunit. With S5 and S12 plays an important role in translational accuracy. This chain is Small ribosomal subunit protein uS4, found in Cenarchaeum symbiosum (strain A).